The chain runs to 189 residues: UPF0301 protein CCA_00630 (189 aa).

Belongs to the UPF0301 (AlgH) family.

The sequence is that of UPF0301 protein CCA_00630 from Chlamydia caviae (strain ATCC VR-813 / DSM 19441 / 03DC25 / GPIC) (Chlamydophila caviae).